A 256-amino-acid polypeptide reads, in one-letter code: tRNA (guanine-N(7)-)-methyltransferase (256 aa).

Residues glutamate 85, glutamate 110, aspartate 137, and aspartate 159 each coordinate S-adenosyl-L-methionine. Aspartate 159 is an active-site residue. Residues lysine 163 and aspartate 195 each coordinate substrate.

The protein belongs to the class I-like SAM-binding methyltransferase superfamily. TrmB family.

The catalysed reaction is guanosine(46) in tRNA + S-adenosyl-L-methionine = N(7)-methylguanosine(46) in tRNA + S-adenosyl-L-homocysteine. The protein operates within tRNA modification; N(7)-methylguanine-tRNA biosynthesis. Its function is as follows. Catalyzes the formation of N(7)-methylguanine at position 46 (m7G46) in tRNA. This Rhodopseudomonas palustris (strain BisB5) protein is tRNA (guanine-N(7)-)-methyltransferase.